The primary structure comprises 318 residues: Acetyl-coenzyme A carboxylase carboxyl transferase subunit alpha (318 aa).

A CoA carboxyltransferase C-terminal domain is found at 39-292 (LTDKSEKQLR…GDSIAAELPD (254 aa)).

Belongs to the AccA family. In terms of assembly, acetyl-CoA carboxylase is a heterohexamer composed of biotin carboxyl carrier protein (AccB), biotin carboxylase (AccC) and two subunits each of ACCase subunit alpha (AccA) and ACCase subunit beta (AccD).

Its subcellular location is the cytoplasm. The catalysed reaction is N(6)-carboxybiotinyl-L-lysyl-[protein] + acetyl-CoA = N(6)-biotinyl-L-lysyl-[protein] + malonyl-CoA. Its pathway is lipid metabolism; malonyl-CoA biosynthesis; malonyl-CoA from acetyl-CoA: step 1/1. Functionally, component of the acetyl coenzyme A carboxylase (ACC) complex. First, biotin carboxylase catalyzes the carboxylation of biotin on its carrier protein (BCCP) and then the CO(2) group is transferred by the carboxyltransferase to acetyl-CoA to form malonyl-CoA. The polypeptide is Acetyl-coenzyme A carboxylase carboxyl transferase subunit alpha (Gluconacetobacter diazotrophicus (strain ATCC 49037 / DSM 5601 / CCUG 37298 / CIP 103539 / LMG 7603 / PAl5)).